Here is a 291-residue protein sequence, read N- to C-terminus: Neugrin (291 aa).

A signal peptide spans 1–15; sequence MAVTLSLLLGGRVCA. Disordered stretches follow at residues 26-48 and 155-270; these read GVAG…PEER and GSGN…DNFS. S41 is subject to Phosphoserine. 2 N-linked (GlcNAc...) asparagine glycosylation sites follow: N158 and N186. Residues 236-246 show a composition bias toward polar residues; that stretch reads KYSSDSESPRG. N-linked (GlcNAc...) asparagine glycosylation occurs at N268.

This sequence belongs to the neugrin family. As to quaternary structure, forms a regulatory protein-RNA complex, consisting of RCC1L, NGRN, RPUSD3, RPUSD4, TRUB2, FASTKD2 and 16S mt-rRNA. Interacts with 16S mt-rRNA; this interaction is direct. Expressed at high levels in heart, brain and skeletal muscle. In brain, mainly expressed in neurons rather than glial cells.

Its subcellular location is the nucleus. It is found in the secreted. The protein resides in the mitochondrion membrane. In terms of biological role, plays an essential role in mitochondrial ribosome biogenesis. As a component of a functional protein-RNA module, consisting of RCC1L, NGRN, RPUSD3, RPUSD4, TRUB2, FASTKD2 and 16S mitochondrial ribosomal RNA (16S mt-rRNA), controls 16S mt-rRNA abundance and is required for intra-mitochondrial translation of core subunits of the oxidative phosphorylation system. This Homo sapiens (Human) protein is Neugrin.